The following is a 494-amino-acid chain: Maintenance of mitochondrial morphology protein 1 (494 aa).

The Lumenal portion of the chain corresponds to 1–25 (MGDDQSLRSTVAENDISANLSFTQG). Residues 26–46 (FLLGQLSVVLLIGAFIKFFIF) form a helical membrane-spanning segment. Topologically, residues 47–494 (GEAPPPPSRG…GTLPGGAAAN (448 aa)) are cytoplasmic. 3 disordered regions span residues 53 to 99 (PSRG…VPSS), 278 to 330 (PPLH…KSNV), and 395 to 494 (RTGV…AAAN). Positions 57-67 (LSHRASTHRRS) are enriched in basic residues. 2 stretches are compositionally biased toward polar residues: residues 68 to 81 (NSIYTINPNEGTSR) and 88 to 99 (STSNVLRPVPSS). An SMP-LTD domain is found at 134–387 (QPESLDWFNV…EPRVQVVGLP (254 aa)). Residues 278-290 (PPLHTPSPSPSPP) are compositionally biased toward pro residues. 2 stretches are compositionally biased toward polar residues: residues 300 to 318 (THPTNGSREPTQEAPNAQE) and 406 to 415 (TGSNAASRSA). Residues 425–437 (RADDIGREPDGLR) show a composition bias toward basic and acidic residues.

It belongs to the MMM1 family. In terms of assembly, homodimer. Component of the ER-mitochondria encounter structure (ERMES) or MDM complex, composed of mmm1, mdm10, mdm12 and mdm34. A mmm1 homodimer associates with one molecule of mdm12 on each side in a pairwise head-to-tail manner, and the SMP-LTD domains of mmm1 and mdm12 generate a continuous hydrophobic tunnel for phospholipid trafficking.

The protein localises to the endoplasmic reticulum membrane. In terms of biological role, component of the ERMES/MDM complex, which serves as a molecular tether to connect the endoplasmic reticulum (ER) and mitochondria. Components of this complex are involved in the control of mitochondrial shape and protein biogenesis, and function in nonvesicular lipid trafficking between the ER and mitochondria. The mdm12-mmm1 subcomplex functions in the major beta-barrel assembly pathway that is responsible for biogenesis of all outer membrane beta-barrel proteins, and acts in a late step after the SAM complex. The mdm10-mdm12-mmm1 subcomplex further acts in the TOM40-specific pathway after the action of the mdm12-mmm1 complex. Essential for establishing and maintaining the structure of mitochondria and maintenance of mtDNA nucleoids. This is Maintenance of mitochondrial morphology protein 1 from Aspergillus oryzae (strain ATCC 42149 / RIB 40) (Yellow koji mold).